The primary structure comprises 270 residues: Probable aquaporin NIP-type (270 aa).

2 consecutive transmembrane segments (helical) span residues 45 to 65 (LIAE…SVAV) and 72 to 92 (VTFP…VYTV). The NPA 1 motif lies at 101-103 (NPA). 3 helical membrane passes run 121-141 (LYII…ALLF), 160-180 (SLAI…GVAT), and 188-208 (VAGI…GPIS). The short motif at 213–215 (NPA) is the NPA 2 element. Residues 231-251 (WVYVVGPIIGTLAGAFVYNLI) traverse the membrane as a helical segment.

The protein belongs to the MIP/aquaporin (TC 1.A.8) family. NIP (TC 1.A.8.12) subfamily. As to expression, pollen specific.

It is found in the membrane. Aquaporins facilitate the transport of water and small neutral solutes across cell membranes. In Nicotiana alata (Winged tobacco), this protein is Probable aquaporin NIP-type.